The chain runs to 221 residues: Small ribosomal subunit protein uS3 (221 aa).

Positions 39–108 constitute a KH type-2 domain; that stretch reads IRKFVKKELF…NVLINIVEVK (70 aa).

This sequence belongs to the universal ribosomal protein uS3 family. As to quaternary structure, part of the 30S ribosomal subunit. Forms a tight complex with proteins S10 and S14.

Binds the lower part of the 30S subunit head. Binds mRNA in the 70S ribosome, positioning it for translation. In Clostridium beijerinckii (strain ATCC 51743 / NCIMB 8052) (Clostridium acetobutylicum), this protein is Small ribosomal subunit protein uS3.